We begin with the raw amino-acid sequence, 1131 residues long: Phytochrome B1 (1131 aa).

A compositionally biased stretch (basic residues) spans 1 to 11 (MASGSRTKHSY). The disordered stretch occupies residues 1–26 (MASGSRTKHSYHNSSQGQAQSSGTSN). The segment covering 14–25 (SSQGQAQSSGTS) has biased composition (low complexity). The GAF domain occupies 229–408 (DIKLLCDTVV…AFGLQLNMEL (180 aa)). Cys334 is a phytochromobilin binding site. PAS domains follow at residues 622–693 (VARE…LRGV) and 756–808 (DYKA…GEIF). The Histidine kinase domain occupies 904-1124 (YICQEVKSPL…MIILDLPMTR (221 aa)).

It belongs to the phytochrome family. Homodimer. In terms of processing, contains one covalently linked phytochromobilin chromophore.

In terms of biological role, regulatory photoreceptor which exists in two forms that are reversibly interconvertible by light: the Pr form that absorbs maximally in the red region of the spectrum and the Pfr form that absorbs maximally in the far-red region. Photoconversion of Pr to Pfr induces an array of morphogenic responses, whereas reconversion of Pfr to Pr cancels the induction of those responses. Pfr controls the expression of a number of nuclear genes including those encoding the small subunit of ribulose-bisphosphate carboxylase, chlorophyll A/B binding protein, protochlorophyllide reductase, rRNA, etc. It also controls the expression of its own gene(s) in a negative feedback fashion. This is Phytochrome B1 from Solanum lycopersicum (Tomato).